The sequence spans 230 residues: Ubiquitin carboxyl-terminal hydrolase isozyme L3 (230 aa).

The region spanning 5 to 229 is the UCH catalytic domain; that stretch reads RWLPLEANPE…LRFNAIALSA (225 aa). The interval 8–13 is interaction with ubiquitin; sequence PLEANP. The Nucleophile role is filled by C95. Position 130 is a phosphoserine (S130). Residues 152 to 159 form an interaction with ubiquitin. Crossover loop which restricts access of large ubiquitin adducts to the active site region; sequence AHEGQTEA. H169 (proton donor) is an active-site residue. The interaction with ubiquitin stretch occupies residues 219–224; sequence ELRFNA.

This sequence belongs to the peptidase C12 family. Preferentially binds diubiquitin; the interaction does not hydrolyze diubiquitin but, in vitro, inhibits the hydrolyzing activity on other substrates.

Its subcellular location is the cytoplasm. It carries out the reaction Thiol-dependent hydrolysis of ester, thioester, amide, peptide and isopeptide bonds formed by the C-terminal Gly of ubiquitin (a 76-residue protein attached to proteins as an intracellular targeting signal).. With respect to regulation, inhibited by monoubiquitin and diubiquitin. Functionally, deubiquitinating enzyme (DUB) that controls levels of cellular ubiquitin through processing of ubiquitin precursors and ubiquitinated proteins. Thiol protease that recognizes and hydrolyzes a peptide bond at the C-terminal glycine of either ubiquitin or NEDD8. Has a 10-fold preference for Arg and Lys at position P3, and exhibits a preference towards 'Lys-48'-linked ubiquitin chains. Deubiquitinates ENAC in apical compartments, thereby regulating apical membrane recycling. Indirectly increases the phosphorylation of IGFIR, AKT and FOXO1 and promotes insulin-signaling and insulin-induced adipogenesis. Required for stress-response retinal, skeletal muscle and germ cell maintenance. May be involved in working memory. Can hydrolyze UBB(+1), a mutated form of ubiquitin which is not effectively degraded by the proteasome. This chain is Ubiquitin carboxyl-terminal hydrolase isozyme L3 (UCHL3), found in Sus scrofa (Pig).